A 144-amino-acid chain; its full sequence is Acidic phospholipase A2 S15-109 (144 aa).

A signal peptide spans 1–19 (MYPAHLLVLLAVCVSLLGA). The propeptide occupies 20–27 (SDIPPQPL). Intrachain disulfides connect cysteine 38-cysteine 98, cysteine 54-cysteine 143, cysteine 56-cysteine 72, cysteine 71-cysteine 126, cysteine 78-cysteine 119, cysteine 87-cysteine 112, and cysteine 105-cysteine 117. 3 residues coordinate Ca(2+): tyrosine 55, glycine 57, and glycine 59. Histidine 75 is an active-site residue. Aspartate 76 serves as a coordination point for Ca(2+). The active site involves aspartate 120.

Belongs to the phospholipase A2 family. Group I subfamily. D49 sub-subfamily. It depends on Ca(2+) as a cofactor. Expressed by the venom gland.

The protein localises to the secreted. The enzyme catalyses a 1,2-diacyl-sn-glycero-3-phosphocholine + H2O = a 1-acyl-sn-glycero-3-phosphocholine + a fatty acid + H(+). Functionally, snake venom phospholipase A2 (PLA2) that inhibits collagen-induced platelet aggregation. PLA2 catalyzes the calcium-dependent hydrolysis of the 2-acyl groups in 3-sn-phosphoglycerides. The sequence is that of Acidic phospholipase A2 S15-109 from Austrelaps superbus (Lowland copperhead snake).